The following is a 119-amino-acid chain: Large ribosomal subunit protein bL20 (119 aa).

The protein belongs to the bacterial ribosomal protein bL20 family.

In terms of biological role, binds directly to 23S ribosomal RNA and is necessary for the in vitro assembly process of the 50S ribosomal subunit. It is not involved in the protein synthesizing functions of that subunit. The polypeptide is Large ribosomal subunit protein bL20 (Clostridium botulinum (strain ATCC 19397 / Type A)).